The following is an 828-amino-acid chain: DNA gyrase subunit A (828 aa).

The region spanning 32-497 (LPDVRDGLKP…EVLSLEDEDL (466 aa)) is the Topo IIA-type catalytic domain. Tyr-120 serves as the catalytic O-(5'-phospho-DNA)-tyrosine intermediate. Positions 524 to 530 (QKRGGRG) match the GyrA-box motif.

This sequence belongs to the type II topoisomerase GyrA/ParC subunit family. As to quaternary structure, heterotetramer, composed of two GyrA and two GyrB chains. In the heterotetramer, GyrA contains the active site tyrosine that forms a transient covalent intermediate with DNA, while GyrB binds cofactors and catalyzes ATP hydrolysis.

It is found in the cytoplasm. It catalyses the reaction ATP-dependent breakage, passage and rejoining of double-stranded DNA.. In terms of biological role, a type II topoisomerase that negatively supercoils closed circular double-stranded (ds) DNA in an ATP-dependent manner to modulate DNA topology and maintain chromosomes in an underwound state. Negative supercoiling favors strand separation, and DNA replication, transcription, recombination and repair, all of which involve strand separation. Also able to catalyze the interconversion of other topological isomers of dsDNA rings, including catenanes and knotted rings. Type II topoisomerases break and join 2 DNA strands simultaneously in an ATP-dependent manner. The sequence is that of DNA gyrase subunit A from Streptococcus pyogenes serotype M18 (strain MGAS8232).